The following is a 148-amino-acid chain: Lipoprotein MlpH (148 aa).

An N-terminal signal peptide occupies residues 1-17 (MKIINILFCLFLLMLNG). A lipid anchor (N-palmitoyl cysteine) is attached at C18. A lipid anchor (S-diacylglycerol cysteine) is attached at C18. The segment at 26–61 (LKNNAQQTKSRRKRDLTQKEVTQEKPKSKEELLREK) is disordered. Residues 40-61 (DLTQKEVTQEKPKSKEELLREK) are compositionally biased toward basic and acidic residues.

Belongs to the Multicopy lipoprotein (Mlp) family.

It is found in the cell outer membrane. In terms of biological role, an outer membrane protein that may participate in pathogenesis. Some human Lyme disease patients have antibodies against this protein. The Mlp proteins probably undergo intragenic recombination, generating new alleles. The chain is Lipoprotein MlpH from Borreliella burgdorferi (strain ATCC 35210 / DSM 4680 / CIP 102532 / B31) (Borrelia burgdorferi).